The sequence spans 377 residues: Glutamate 5-kinase (377 aa).

Lysine 22 is a binding site for ATP. 3 residues coordinate substrate: serine 62, aspartate 149, and asparagine 161. Residues 181 to 182 and 223 to 229 contribute to the ATP site; these read TD and TGGMVTK. Positions 285–363 constitute a PUA domain; sequence RGAIVVDAGA…AQLKRFLGPQ (79 aa).

Belongs to the glutamate 5-kinase family.

The protein localises to the cytoplasm. It carries out the reaction L-glutamate + ATP = L-glutamyl 5-phosphate + ADP. The protein operates within amino-acid biosynthesis; L-proline biosynthesis; L-glutamate 5-semialdehyde from L-glutamate: step 1/2. Catalyzes the transfer of a phosphate group to glutamate to form L-glutamate 5-phosphate. The chain is Glutamate 5-kinase from Bifidobacterium longum subsp. infantis (strain ATCC 15697 / DSM 20088 / JCM 1222 / NCTC 11817 / S12).